A 130-amino-acid polypeptide reads, in one-letter code: Small ribosomal subunit protein uS9 (130 aa).

The segment at 111 to 130 is disordered; it reads VERKKVGLHKARRATQFSKR. Residues 116 to 130 are compositionally biased toward basic residues; that stretch reads VGLHKARRATQFSKR.

Belongs to the universal ribosomal protein uS9 family.

This is Small ribosomal subunit protein uS9 from Xylella fastidiosa (strain M23).